We begin with the raw amino-acid sequence, 1298 residues long: Phosphoribosylformylglycinamidine synthase (1298 aa).

The segment at 298-328 (TAIAPFPGASTGSGGEIRDEGATGRGAKPKA) is disordered. ATP is bound by residues 305–316 (GASTGSGGEIRD), 384–386 (TGY), and alanine 676. Mg(2+) contacts are provided by aspartate 677, glutamate 716, asparagine 720, and aspartate 884. Position 886 (serine 886) interacts with ATP. The Glutamine amidotransferase type-1 domain maps to 1045-1298 (VAILREQGVN…MFRNARVWVD (254 aa)). The active-site Nucleophile is cysteine 1138. Residues histidine 1263 and glutamate 1265 contribute to the active site.

This sequence in the N-terminal section; belongs to the FGAMS family. As to quaternary structure, monomer.

Its subcellular location is the cytoplasm. The catalysed reaction is N(2)-formyl-N(1)-(5-phospho-beta-D-ribosyl)glycinamide + L-glutamine + ATP + H2O = 2-formamido-N(1)-(5-O-phospho-beta-D-ribosyl)acetamidine + L-glutamate + ADP + phosphate + H(+). Its pathway is purine metabolism; IMP biosynthesis via de novo pathway; 5-amino-1-(5-phospho-D-ribosyl)imidazole from N(2)-formyl-N(1)-(5-phospho-D-ribosyl)glycinamide: step 1/2. Functionally, phosphoribosylformylglycinamidine synthase involved in the purines biosynthetic pathway. Catalyzes the ATP-dependent conversion of formylglycinamide ribonucleotide (FGAR) and glutamine to yield formylglycinamidine ribonucleotide (FGAM) and glutamate. The sequence is that of Phosphoribosylformylglycinamidine synthase from Pseudomonas aeruginosa (strain ATCC 15692 / DSM 22644 / CIP 104116 / JCM 14847 / LMG 12228 / 1C / PRS 101 / PAO1).